The primary structure comprises 417 residues: Acetate kinase (417 aa).

Mg(2+) is bound at residue Asn9. ATP is bound at residue Lys16. Arg90 is a substrate binding site. Asp147 (proton donor/acceptor) is an active-site residue. Residues 207–211, 282–284, and 330–334 each bind ATP; these read HIGNG, DLR, and GIGEN. Glu384 lines the Mg(2+) pocket.

This sequence belongs to the acetokinase family. Homodimer. The cofactor is Mg(2+). Mn(2+) is required as a cofactor.

The protein localises to the cytoplasm. It catalyses the reaction acetate + ATP = acetyl phosphate + ADP. Its pathway is metabolic intermediate biosynthesis; acetyl-CoA biosynthesis; acetyl-CoA from acetate: step 1/2. Functionally, catalyzes the formation of acetyl phosphate from acetate and ATP. Can also catalyze the reverse reaction. The chain is Acetate kinase from Staphylococcus epidermidis (strain ATCC 35984 / DSM 28319 / BCRC 17069 / CCUG 31568 / BM 3577 / RP62A).